The primary structure comprises 106 residues: NADH-quinone oxidoreductase subunit K (106 aa).

3 helical membrane-spanning segments follow: residues 8-28, 35-55, and 66-86; these read IGIE…VFGV, IIVF…FVAF, and VFVF…LAIL.

Belongs to the complex I subunit 4L family. As to quaternary structure, NDH-1 is composed of 14 different subunits. Subunits NuoA, H, J, K, L, M, N constitute the membrane sector of the complex.

It localises to the cell inner membrane. It catalyses the reaction a quinone + NADH + 5 H(+)(in) = a quinol + NAD(+) + 4 H(+)(out). Functionally, NDH-1 shuttles electrons from NADH, via FMN and iron-sulfur (Fe-S) centers, to quinones in the respiratory chain. The immediate electron acceptor for the enzyme in this species is believed to be a menaquinone. Couples the redox reaction to proton translocation (for every two electrons transferred, four hydrogen ions are translocated across the cytoplasmic membrane), and thus conserves the redox energy in a proton gradient. The chain is NADH-quinone oxidoreductase subunit K from Flavobacterium johnsoniae (strain ATCC 17061 / DSM 2064 / JCM 8514 / BCRC 14874 / CCUG 350202 / NBRC 14942 / NCIMB 11054 / UW101) (Cytophaga johnsonae).